A 151-amino-acid polypeptide reads, in one-letter code: 3-hydroxyacyl-thioester dehydratase Z (151 aa).

Positions 11–131 (AAAAGEKVGQ…TVQATVSTTV (121 aa)) constitute a MaoC-like domain. Substrate contacts are provided by residues 60 to 63 (IAHG), 86 to 89 (AINY), 97 to 99 (PAP), glutamine 124, and arginine 148.

Belongs to the enoyl-CoA hydratase/isomerase family. In terms of assembly, homodimer.

The catalysed reaction is a (3R)-3-hydroxyacyl-CoA = a (2E)-enoyl-CoA + H2O. Functionally, shows trans-enoyl-CoA hydratase/3-hydroxyacyl-CoA dehydratase activity. This is 3-hydroxyacyl-thioester dehydratase Z from Mycobacterium bovis (strain ATCC BAA-935 / AF2122/97).